Consider the following 117-residue polypeptide: Large ribosomal subunit protein eL34 (117 aa).

Phosphoserine is present on Ser-12. The segment covering 16 to 28 (ASNKTRLSRTPGQ) has biased composition (polar residues). A disordered region spans residues 16–35 (ASNKTRLSRTPGQQDRLPLH). Lys-108 is covalently cross-linked (Glycyl lysine isopeptide (Lys-Gly) (interchain with G-Cter in SUMO2)).

Belongs to the eukaryotic ribosomal protein eL34 family. In terms of assembly, component of the large ribosomal subunit.

The protein localises to the cytoplasm. Its subcellular location is the cytosol. It localises to the endoplasmic reticulum. In terms of biological role, component of the large ribosomal subunit. The ribosome is a large ribonucleoprotein complex responsible for the synthesis of proteins in the cell. In Vicugna pacos (Alpaca), this protein is Large ribosomal subunit protein eL34 (RPL34).